We begin with the raw amino-acid sequence, 437 residues long: UDP-N-acetylmuramate--L-alanine ligase (437 aa).

An ATP-binding site is contributed by glycine 114–serine 120.

Belongs to the MurCDEF family.

It is found in the cytoplasm. The enzyme catalyses UDP-N-acetyl-alpha-D-muramate + L-alanine + ATP = UDP-N-acetyl-alpha-D-muramoyl-L-alanine + ADP + phosphate + H(+). Its pathway is cell wall biogenesis; peptidoglycan biosynthesis. Functionally, cell wall formation. In Lactobacillus acidophilus (strain ATCC 700396 / NCK56 / N2 / NCFM), this protein is UDP-N-acetylmuramate--L-alanine ligase.